We begin with the raw amino-acid sequence, 89 residues long: MAKKSVIARNEKRIKLVAKYAVLRAELLKAGDYEALRKLPRDSSATRVRNRCVLTGRGRGVYAKYGLCRHMFRKFALEGKLPGVKKASW.

Belongs to the universal ribosomal protein uS14 family. Part of the 30S ribosomal subunit. Contacts proteins S3 and S10.

Binds 16S rRNA, required for the assembly of 30S particles and may also be responsible for determining the conformation of the 16S rRNA at the A site. The chain is Small ribosomal subunit protein uS14 from Pelodictyon phaeoclathratiforme (strain DSM 5477 / BU-1).